A 77-amino-acid polypeptide reads, in one-letter code: Translation initiation factor IF-1, chloroplastic (77 aa).

In terms of domain architecture, S1-like spans 1-71; sequence MKEQKWVHEG…TRGRIIYRLR (71 aa).

The protein belongs to the IF-1 family. In terms of assembly, component of the 30S ribosomal translation pre-initiation complex which assembles on the 30S ribosome in the order IF-2 and IF-3, IF-1 and N-formylmethionyl-tRNA(fMet); mRNA recruitment can occur at any time during PIC assembly.

It localises to the plastid. Its subcellular location is the chloroplast. One of the essential components for the initiation of protein synthesis. Stabilizes the binding of IF-2 and IF-3 on the 30S subunit to which N-formylmethionyl-tRNA(fMet) subsequently binds. Helps modulate mRNA selection, yielding the 30S pre-initiation complex (PIC). Upon addition of the 50S ribosomal subunit IF-1, IF-2 and IF-3 are released leaving the mature 70S translation initiation complex. This Cercidiphyllum japonicum (Katsura tree) protein is Translation initiation factor IF-1, chloroplastic.